The chain runs to 321 residues: NADH-ubiquinone oxidoreductase chain 1 (321 aa).

8 consecutive transmembrane segments (helical) span residues 9–29, 75–95, 106–126, 151–171, 177–197, 219–239, 256–276, and 297–317; these read ITNSLLYILSILIAVAFLTLL, ILFTLSPIMALILALTSWAPM, LGLLFIMAMSGMFTYAILWSG, TLGLIIISMAILSGGYSLMLF, HMWLLLSSWPLAMMWFTSTLA, VEFSAGPFALLFLAEYTNILF, PQLFTINLMTKTMILTTLFLW, and YLPLTLAMYLLNTSTSMALCG.

It belongs to the complex I subunit 1 family.

The protein resides in the mitochondrion inner membrane. The catalysed reaction is a ubiquinone + NADH + 5 H(+)(in) = a ubiquinol + NAD(+) + 4 H(+)(out). Core subunit of the mitochondrial membrane respiratory chain NADH dehydrogenase (Complex I) that is believed to belong to the minimal assembly required for catalysis. Complex I functions in the transfer of electrons from NADH to the respiratory chain. The immediate electron acceptor for the enzyme is believed to be ubiquinone. The polypeptide is NADH-ubiquinone oxidoreductase chain 1 (MT-ND1) (Lycodon semicarinatus (Ryukyu odd-tooth snake)).